The following is a 1531-amino-acid chain: Slit homolog 1 protein (1531 aa).

An N-terminal signal peptide occupies residues 1-33 (MALTPQRGSSSGLSRPELWLLLWAAAWRLGATA). An LRRNT domain is found at 34-61 (CPALCTCTGTTVDCHGTGLQAIPKNIPR). LRR repeat units follow at residues 62–83 (NTER…DFAG), 86–107 (QLRV…AFDD), 110–131 (ELER…LFQN), 134–155 (ALSR…AFRG), 158–179 (DLKN…AFRA), and 182–203 (GLEV…SFNH). An N-linked (GlcNAc...) asparagine glycan is attached at Asn-72. N-linked (GlcNAc...) asparagine glycosylation occurs at Asn-192. The 51-residue stretch at 215-265 (NHLFCDCHLAWLSQWLRQRPTIGLFTQCSGPASLRGLNVAEVQKSEFSCSG) folds into the LRRCT 1 domain. The 37-residue stretch at 273–309 (PACTLSSGSCPAMCSCSNGIVDCRGKGLTAIPANLPE) folds into the LRRNT 2 domain. A disulfide bond links Cys-286 and Cys-295. LRR repeat units lie at residues 310–331 (TMTE…AFSP), 334–355 (KLRR…AFQG), 358–379 (SLNS…VFGG), 382–403 (TLQL…AFQD), and 406–427 (NLSL…TFTS). Residue Asn-406 is glycosylated (N-linked (GlcNAc...) asparagine). Positions 439 to 489 (NPFICDCNLKWLADFLRTNPIETTGARCASPRRLANKRIGQIKSKKFRCSA) constitute an LRRCT 2 domain. 4 disulfides stabilise this stretch: Cys-443–Cys-466, Cys-445–Cys-487, Cys-513–Cys-519, and Cys-517–Cys-526. The 37-residue stretch at 504–540 (NSECTSDVACPHKCRCEASVVECSGLKLSKIPERIPQ) folds into the LRRNT 3 domain. LRR repeat units lie at residues 541–562 (STTE…GLFK), 566–587 (HLKK…TFEG), 590–611 (SVSE…MFRG), 614–635 (GLRT…SFTG), and 638–659 (NVRL…AFDT). N-linked (GlcNAc...) asparagine glycosylation is present at Asn-571. The N-linked (GlcNAc...) asparagine glycan is linked to Asn-630. Positions 671–721 (NPFNCNCQLAWLGDWLRKRKIVTGNPRCQNPDFLRQIPLQDVAFPDFRCEE) constitute an LRRCT 3 domain. Disulfide bonds link Cys-675/Cys-698 and Cys-677/Cys-719. The 37-residue stretch at 725 to 761 (EVGCLPRPQCPQECACLDTVVRCSNKHLQALPKGIPK) folds into the LRRNT 4 domain. N-linked (GlcNAc...) asparagine glycosylation is found at Asn-762, Asn-801, and Asn-806. LRR repeat units lie at residues 762-783 (NVTE…LSTF), 785-806 (YLQL…SFTN), 809-830 (QLTT…AFQG), and 833-854 (SLRL…IFAD). The LRRCT 4 domain occupies 866-916 (NPLYCDCHLRWLSSWVKTGYKEPGIARCAGPPEMEGKLLLTTPAKKFECQG). EGF-like domains are found at residues 927–962 (DPCL…RNCE), 964–1003 (SLDS…LTCG), 1005–1041 (NTDD…RACE), 1043–1081 (LVDF…DNCS), 1083–1119 (NQDD…QLCE), and 1124–1160 (PRNS…PECE). Intrachain disulfides connect Cys-929-Cys-940, Cys-934-Cys-950, Cys-952-Cys-961, Cys-968-Cys-979, Cys-973-Cys-991, Cys-993-Cys-1002, Cys-1009-Cys-1020, Cys-1014-Cys-1029, Cys-1031-Cys-1040, Cys-1047-Cys-1060, Cys-1054-Cys-1069, Cys-1071-Cys-1080, Cys-1087-Cys-1098, Cys-1092-Cys-1107, Cys-1109-Cys-1118, Cys-1128-Cys-1139, Cys-1133-Cys-1148, and Cys-1150-Cys-1159. Asn-1026 is a glycosylation site (N-linked (GlcNAc...) asparagine). N-linked (GlcNAc...) asparagine glycosylation occurs at Asn-1079. Residues 1163–1336 (LSVNFVDRDT…QMKPGVVPGC (174 aa)) enclose the Laminin G-like domain. Asn-1186, Asn-1256, and Asn-1303 each carry an N-linked (GlcNAc...) asparagine glycan. Disulfide bonds link Cys-1310-Cys-1336, Cys-1339-Cys-1349, Cys-1344-Cys-1359, Cys-1361-Cys-1370, Cys-1378-Cys-1388, Cys-1383-Cys-1398, Cys-1400-Cys-1409, Cys-1419-Cys-1429, Cys-1424-Cys-1439, Cys-1441-Cys-1450, Cys-1456-Cys-1495, Cys-1474-Cys-1509, Cys-1485-Cys-1525, and Cys-1489-Cys-1527. EGF-like domains follow at residues 1337-1371 (EPCR…LHCD), 1374-1410 (VDGP…ALCN), and 1415-1451 (VAEP…ELCE). The region spanning 1456–1531 (CRGDPVRDFH…PTKCGCAPCA (76 aa)) is the CTCK domain.

Interacts with ROBO1 and GREM1. In terms of tissue distribution, in adult brains expressed in the hippocampus, cerebral cortex, and olfactory bulb but not in the cerebellum. In embryo expressed in cerebral cortex.

It is found in the secreted. In terms of biological role, thought to act as molecular guidance cue in cellular migration, and function appears to be mediated by interaction with roundabout homolog receptors. During neural development involved in axonal navigation at the ventral midline of the neural tube and projection of axons to different regions. SLIT1 and SLIT2 together seem to be essential for midline guidance in the forebrain by acting as repulsive signal preventing inappropriate midline crossing by axons projecting from the olfactory bulb. This Rattus norvegicus (Rat) protein is Slit homolog 1 protein (Slit1).